The primary structure comprises 238 residues: ATP-dependent dethiobiotin synthetase BioD (238 aa).

ATP is bound at residue 12-17; sequence EVGKTV. Threonine 16 contacts Mg(2+). Lysine 37 is an active-site residue. A substrate-binding site is contributed by threonine 41. ATP contacts are provided by residues aspartate 50, 109–112, 170–171, and 200–202; these read EGAG, GS, and PAG. The Mg(2+) site is built by aspartate 50 and glutamate 109.

The protein belongs to the dethiobiotin synthetase family. Homodimer. It depends on Mg(2+) as a cofactor.

The protein localises to the cytoplasm. The enzyme catalyses (7R,8S)-7,8-diammoniononanoate + CO2 + ATP = (4R,5S)-dethiobiotin + ADP + phosphate + 3 H(+). The protein operates within cofactor biosynthesis; biotin biosynthesis; biotin from 7,8-diaminononanoate: step 1/2. Catalyzes a mechanistically unusual reaction, the ATP-dependent insertion of CO2 between the N7 and N8 nitrogen atoms of 7,8-diaminopelargonic acid (DAPA, also called 7,8-diammoniononanoate) to form a ureido ring. In Parafrankia sp. (strain EAN1pec), this protein is ATP-dependent dethiobiotin synthetase BioD.